A 296-amino-acid polypeptide reads, in one-letter code: Acetylglutamate kinase (296 aa).

Substrate is bound by residues 69–70 (GG), R91, and N193.

This sequence belongs to the acetylglutamate kinase family. ArgB subfamily.

The protein resides in the cytoplasm. It carries out the reaction N-acetyl-L-glutamate + ATP = N-acetyl-L-glutamyl 5-phosphate + ADP. It functions in the pathway amino-acid biosynthesis; L-arginine biosynthesis; N(2)-acetyl-L-ornithine from L-glutamate: step 2/4. Catalyzes the ATP-dependent phosphorylation of N-acetyl-L-glutamate. The chain is Acetylglutamate kinase from Albidiferax ferrireducens (strain ATCC BAA-621 / DSM 15236 / T118) (Rhodoferax ferrireducens).